The following is a 242-amino-acid chain: Glutathione S-transferase 3 (242 aa).

A GST N-terminal domain is found at 1-79; it reads MIVLHHLKNS…HLVRKYGPSF (79 aa). Positions 85 to 234 constitute a GST C-terminal domain; that stretch reads DVAELEKYEL…ERYSHPPTPP (150 aa). S228 bears the Phosphoserine mark. T232 carries the phosphothreonine modification.

The protein belongs to the GST superfamily. In terms of assembly, interacts with sad1.

The protein localises to the cytoplasm. It catalyses the reaction RX + glutathione = an S-substituted glutathione + a halide anion + H(+). In terms of biological role, may have a role in the detoxification of various heavy metals. This chain is Glutathione S-transferase 3 (gst3), found in Schizosaccharomyces pombe (strain 972 / ATCC 24843) (Fission yeast).